The primary structure comprises 274 residues: Putative pyruvate, phosphate dikinase regulatory protein (274 aa).

Residue 150-157 (GPSRTSKT) coordinates ADP.

This sequence belongs to the pyruvate, phosphate/water dikinase regulatory protein family. PDRP subfamily.

It carries out the reaction N(tele)-phospho-L-histidyl/L-threonyl-[pyruvate, phosphate dikinase] + ADP = N(tele)-phospho-L-histidyl/O-phospho-L-threonyl-[pyruvate, phosphate dikinase] + AMP + H(+). The enzyme catalyses N(tele)-phospho-L-histidyl/O-phospho-L-threonyl-[pyruvate, phosphate dikinase] + phosphate + H(+) = N(tele)-phospho-L-histidyl/L-threonyl-[pyruvate, phosphate dikinase] + diphosphate. Bifunctional serine/threonine kinase and phosphorylase involved in the regulation of the pyruvate, phosphate dikinase (PPDK) by catalyzing its phosphorylation/dephosphorylation. This is Putative pyruvate, phosphate dikinase regulatory protein from Rickettsia peacockii (strain Rustic).